A 30-amino-acid chain; its full sequence is MVKAVTVLNSSEGPHGIVYFAQEGDGPTTV.

It belongs to the Cu-Zn superoxide dismutase family. It depends on Cu cation as a cofactor. Zn(2+) serves as cofactor. As to expression, expressed in fruits, leaves and pollen grains.

It localises to the cytoplasm. Its subcellular location is the endoplasmic reticulum. It catalyses the reaction 2 superoxide + 2 H(+) = H2O2 + O2. With respect to regulation, inhibited by KCN and H(2)O(2). Functionally, destroys radicals which are normally produced within the cells and which are toxic to biological systems. Probably involved in the protection against oxidative stress during pollen development. The protein is Superoxide dismutase [Cu-Zn] 1 of Olea europaea (Common olive).